The chain runs to 660 residues: Threonine--tRNA ligase (660 aa).

Residues 1–49 (MPDSIVHVKKGQRFLDVIKDKNVVAVKIDSVLHDLRDVAERDVDAIPVS) enclose the TGS domain. A catalytic region spans residues 225 to 554 (DHRRIIAEMD…LLEHYAGKLP (330 aa)). Zn(2+) contacts are provided by cysteine 318, histidine 369, and histidine 531.

It belongs to the class-II aminoacyl-tRNA synthetase family. In terms of assembly, homodimer. Requires Zn(2+) as cofactor.

The protein resides in the cytoplasm. The enzyme catalyses tRNA(Thr) + L-threonine + ATP = L-threonyl-tRNA(Thr) + AMP + diphosphate + H(+). Catalyzes the attachment of threonine to tRNA(Thr) in a two-step reaction: L-threonine is first activated by ATP to form Thr-AMP and then transferred to the acceptor end of tRNA(Thr). The chain is Threonine--tRNA ligase from Thermoplasma acidophilum (strain ATCC 25905 / DSM 1728 / JCM 9062 / NBRC 15155 / AMRC-C165).